Consider the following 670-residue polypeptide: Probable urocanate hydratase (670 aa).

NAD(+) contacts are provided by residues 126–127 (GG), glutamine 204, 250–252 (GMS), glutamate 270, 316–317 (NV), 338–342 (QTSLH), 349–350 (FY), tyrosine 398, and glycine 590.

This sequence belongs to the urocanase family. NAD(+) is required as a cofactor.

The catalysed reaction is 4-imidazolone-5-propanoate = trans-urocanate + H2O. Its pathway is amino-acid degradation; L-histidine degradation into L-glutamate; N-formimidoyl-L-glutamate from L-histidine: step 2/3. The sequence is that of Probable urocanate hydratase from Caenorhabditis elegans.